A 244-amino-acid chain; its full sequence is DNA repair protein RecO (244 aa).

It belongs to the RecO family.

Functionally, involved in DNA repair and RecF pathway recombination. This Ehrlichia chaffeensis (strain ATCC CRL-10679 / Arkansas) protein is DNA repair protein RecO.